A 502-amino-acid polypeptide reads, in one-letter code: Acetyl-coenzyme A carboxylase carboxyl transferase subunit beta, chloroplastic (502 aa).

Low complexity predominate over residues 191-202; that stretch reads GSDSESSSIRTS. Positions 191-212 are disordered; it reads GSDSESSSIRTSGNDSNFNVRE. The CoA carboxyltransferase N-terminal domain maps to 226–497; sequence LWVQCENCYE…NQNSSGARGS (272 aa). Positions 230, 233, 249, and 252 each coordinate Zn(2+). Residues 230 to 252 form a C4-type zinc finger; that stretch reads CENCYELNYRSFFRSKMNICEQC.

Belongs to the AccD/PCCB family. As to quaternary structure, acetyl-CoA carboxylase is a heterohexamer composed of biotin carboxyl carrier protein, biotin carboxylase and 2 subunits each of ACCase subunit alpha and ACCase plastid-coded subunit beta (accD). Requires Zn(2+) as cofactor.

It is found in the plastid. It localises to the chloroplast stroma. It carries out the reaction N(6)-carboxybiotinyl-L-lysyl-[protein] + acetyl-CoA = N(6)-biotinyl-L-lysyl-[protein] + malonyl-CoA. The protein operates within lipid metabolism; malonyl-CoA biosynthesis; malonyl-CoA from acetyl-CoA: step 1/1. Component of the acetyl coenzyme A carboxylase (ACC) complex. Biotin carboxylase (BC) catalyzes the carboxylation of biotin on its carrier protein (BCCP) and then the CO(2) group is transferred by the transcarboxylase to acetyl-CoA to form malonyl-CoA. This chain is Acetyl-coenzyme A carboxylase carboxyl transferase subunit beta, chloroplastic, found in Chloranthus spicatus (Chulantree).